A 285-amino-acid chain; its full sequence is MAFMDKSEVRQRLQKVLQQCAKAPTWSPKEEVRQSIFWKSIRAELIGSLVLMVFSCSRDSIYGPVSYGCTYAILSYCFKSISAHFNPVITIAALLLRSITPFRCISLVLAQTLGTLSGASVCYYGLSNETETGSAPISPVLNVSPAKGFGYEFFGTFVIILTMSSYLDCNDYVSESGDSNLLPLIFGLSVGLSSGMARQATGGFLNPMRAFSLALFELNHWSNHYIYWIGPIFGCLLAVFTFDYTRPIIPNRDSNNRINFPTFNKNNKYEVEMQPETEITLATLA.

Transmembrane regions (helical) follow at residues 36-56 (IFWKSIRAELIGSLVLMVFSC), 76-96 (YCFKSISAHFNPVITIAALLL), and 105-125 (ISLVLAQTLGTLSGASVCYYG). An NPA 1 motif is present at residues 86–88 (NPV). Asn-128 carries N-linked (GlcNAc...) asparagine glycosylation. The next 2 membrane-spanning stretches (helical) occupy residues 143–163 (VSPAKGFGYEFFGTFVIILTM) and 177–197 (GDSNLLPLIFGLSVGLSSGMA). The NPA 2 signature appears at 206–208 (NPM). A helical transmembrane segment spans residues 225 to 245 (YIYWIGPIFGCLLAVFTFDYT).

It belongs to the MIP/aquaporin (TC 1.A.8) family.

It is found in the cell membrane. Functionally, probable water-specific aquaporin that may modulate the water content and osmolytes during anhydrobiosis. This chain is Aquaporin-6, found in Milnesium tardigradum (Water bear).